We begin with the raw amino-acid sequence, 138 residues long: Large ribosomal subunit protein uL16 (138 aa).

The span at 1–13 (MLQPKRRKYRKEQ) shows a compositional bias: basic residues. The disordered stretch occupies residues 1–24 (MLQPKRRKYRKEQKGRNTGKATRG).

This sequence belongs to the universal ribosomal protein uL16 family. Part of the 50S ribosomal subunit.

Functionally, binds 23S rRNA and is also seen to make contacts with the A and possibly P site tRNAs. This Cupriavidus necator (strain ATCC 17699 / DSM 428 / KCTC 22496 / NCIMB 10442 / H16 / Stanier 337) (Ralstonia eutropha) protein is Large ribosomal subunit protein uL16.